The chain runs to 484 residues: UDP-glycosyltransferase 73B4 (484 aa).

His-18 serves as the catalytic Proton acceptor. The an anthocyanidin site is built by His-18 and Asn-89. Residue Asp-129 is the Charge relay of the active site. UDP-alpha-D-glucose is bound by residues Ala-356, Gln-358, His-373, Trp-376, Asn-377, Ser-378, and Glu-381. Ala-396 serves as a coordination point for an anthocyanidin. UDP-alpha-D-glucose contacts are provided by Glu-397 and Gln-398.

It belongs to the UDP-glycosyltransferase family. In terms of tissue distribution, specifically expressed in roots.

The catalysed reaction is a flavonol + UDP-alpha-D-glucose = a flavonol 3-O-beta-D-glucoside + UDP + H(+). Its function is as follows. Possesses quercetin 3-O-glucosyltransferase and low 7-O-glucosyltransferase activities in vitro. Also active in vitro on benzoates and benzoate derivatives. Can detoxify the explosive 2,4,6-trinitrotoluene in plant by forming O- or C-glucose conjugates. This Arabidopsis thaliana (Mouse-ear cress) protein is UDP-glycosyltransferase 73B4 (UGT73B4).